A 623-amino-acid chain; its full sequence is Putative chaperone protein ClpB2, chloroplastic (623 aa).

Residues 1–123 (MNDLKFDPNV…KSEVEKLRGE (123 aa)) enclose the Clp R domain. Repeat stretches follow at residues 6-71 (FDPN…NQSL) and 77-123 (RNLG…LRGE). Residues 129–375 (LKTYGTDLVE…HVKAQLDIQP (247 aa)) are i. Residue 172 to 179 (GEPGVGKT) coordinates ATP. The stretch at 368–462 (KAQLDIQPEE…LQEAERQHDV (95 aa)) forms a coiled coil. 571-578 (GPTGVGKT) lines the ATP pocket.

Belongs to the ClpA/ClpB family.

This is Putative chaperone protein ClpB2, chloroplastic (CLPB2) from Arabidopsis thaliana (Mouse-ear cress).